Consider the following 130-residue polypeptide: Small ribosomal subunit protein eS8 (130 aa).

The protein belongs to the eukaryotic ribosomal protein eS8 family. In terms of assembly, part of the 30S ribosomal subunit.

The chain is Small ribosomal subunit protein eS8 from Ignicoccus hospitalis (strain KIN4/I / DSM 18386 / JCM 14125).